The following is a 3081-amino-acid chain: Cilia- and flagella-associated protein 54 (3081 aa).

Disordered regions lie at residues 542 to 579 (SGTAGAAPPPPPRRVSMTGMLAGGSASPPNGSSGAGGA), 591 to 626 (TQTAGSPSHNGGAAGATASAGGGAAGAPPRPQQSSL), 910 to 942 (PPQPKLLQRSPTSVTLVAHPPGPGLKQPPGARK), 1406 to 1451 (ADAP…GITP), 1518 to 1586 (ESIL…YPVV), 1636 to 1657 (RRAALAASASTAGAGLGEEERP), 2176 to 2210 (GERTAAPKPASPAKGAAKGAAAAAPEPPGAGLPEP), 2229 to 2306 (MASG…SQRA), and 2776 to 2806 (ARPVATSSSGARPPGTPPGGKPGAGGGSGDG). Positions 564–579 (GGSASPPNGSSGAGGA) are enriched in low complexity. The segment covering 1428–1449 (MPPPVPDPSAAGPPPLTPPEGI) has biased composition (pro residues). A compositionally biased stretch (basic and acidic residues) spans 1538–1550 (GGKDDKKKDDKAP). Composition is skewed to low complexity over residues 1638-1648 (AALAASASTAG), 2181-2199 (APKPASPAKGAAKGAAAAA), and 2240-2269 (EPSSAGKPAAAGKPAPARAPSPGRAKSPTG). The segment covering 2289–2301 (PEVPGPPPPPPPS) has biased composition (pro residues). Residues 2776-2788 (ARPVATSSSGARP) show a composition bias toward low complexity. Residues 2796 to 2805 (KPGAGGGSGD) show a composition bias toward gly residues.

The protein belongs to the CFAP54 family. Part of the PDCP1 complex composed of CFAP46, CFAP54, CFAP74 and CFAP221; the PDCP1 complex binds calmodulin.

It localises to the cytoplasm. Its subcellular location is the cytoskeleton. It is found in the cilium axoneme. This Chlamydomonas reinhardtii (Chlamydomonas smithii) protein is Cilia- and flagella-associated protein 54.